The chain runs to 60 residues: LFTLVVLLMVSADMAFAGFGCPRDQYKCNSHCQSIGCRAGYCDAVTLWLRCTCTDCNGKK.

The signal sequence occupies residues 1-17 (LFTLVVLLMVSADMAFA). Positions 19, 20, and 21 each coordinate beta-D-GlcNAc-(1-&gt;4)-Mur2Ac(oyl-L-Ala-gamma-D-Glu-L-Lys-D-Ala-D-Ala)-di-trans,octa-cis-undecaprenyl diphosphate. Cystine bridges form between cysteine 21-cysteine 42, cysteine 28-cysteine 51, cysteine 32-cysteine 53, and cysteine 37-cysteine 56. Positions 22–25 (PRDQ) are binds to membrane interface. Histidine 31 is a binding site for beta-D-GlcNAc-(1-&gt;4)-Mur2Ac(oyl-L-Ala-gamma-D-Glu-L-Lys-D-Ala-D-Ala)-di-trans,octa-cis-undecaprenyl diphosphate. The tract at residues 43–49 (DAVTLWL) is binds to membrane interface. Beta-D-GlcNAc-(1-&gt;4)-Mur2Ac(oyl-L-Ala-gamma-D-Glu-L-Lys-D-Ala-D-Ala)-di-trans,octa-cis-undecaprenyl diphosphate is bound at residue cysteine 51.

It belongs to the invertebrate defensin family. In terms of tissue distribution, expressed in hemocytes.

The protein resides in the secreted. The protein localises to the target cell membrane. Functionally, antibacterial peptide mostly active against Gram-positive bacteria. It acts by selectively inhibiting peptidoglycan biosynthesis through complex formation with the cell wall precursor lipid II (1:1 molar ratio) thus inhibiting cell wall synthesis. It does not disrupt cell membranes. Is noticeably less potent than Cg-Defh2 and Cg-Defm. Shows no or limited activities against Gram-negative bacteria. This chain is Hemocyte defensin Cg-Defh1, found in Magallana gigas (Pacific oyster).